We begin with the raw amino-acid sequence, 162 residues long: MNCPDCGDEQTRVIDTETSADGTSVRRRRECQRCSFRFTTYERPEWDSLQVKKRNGTIEPFNRTKLRAGIERAVEKRDVSETTVTTLVDDIESALQDRETRLVSSSLIGELVSDRLRDLDKVAYIRFVSVYKAFSEPQEFLRELDAVLNAEIDDFEAPNDSQ.

The segment at M1–D21 is disordered. Residues C3 to C34 fold into a zinc finger. Residues L49–E139 form the ATP-cone domain.

It belongs to the NrdR family. Requires Zn(2+) as cofactor.

Its function is as follows. Negatively regulates transcription of bacterial ribonucleotide reductase nrd genes and operons by binding to NrdR-boxes. The polypeptide is Transcriptional repressor NrdR (Halorubrum lacusprofundi (strain ATCC 49239 / DSM 5036 / JCM 8891 / ACAM 34)).